The sequence spans 154 residues: Protein phosphatase 1 regulatory subunit 27 (154 aa).

ANK repeat units follow at residues 63–92 and 96–125; these read SGLA…DIHQ and AGWT…DRDA.

As to quaternary structure, interacts with DYSF and PPP1CA.

Inhibits phosphatase activity of protein phosphatase 1 (PP1) complexes. The protein is Protein phosphatase 1 regulatory subunit 27 (PPP1R27) of Homo sapiens (Human).